Reading from the N-terminus, the 957-residue chain is Glycine dehydrogenase (decarboxylating) (957 aa).

Lys-708 carries the post-translational modification N6-(pyridoxal phosphate)lysine.

Belongs to the GcvP family. The glycine cleavage system is composed of four proteins: P, T, L and H. Pyridoxal 5'-phosphate is required as a cofactor.

The enzyme catalyses N(6)-[(R)-lipoyl]-L-lysyl-[glycine-cleavage complex H protein] + glycine + H(+) = N(6)-[(R)-S(8)-aminomethyldihydrolipoyl]-L-lysyl-[glycine-cleavage complex H protein] + CO2. Its function is as follows. The glycine cleavage system catalyzes the degradation of glycine. The P protein binds the alpha-amino group of glycine through its pyridoxal phosphate cofactor; CO(2) is released and the remaining methylamine moiety is then transferred to the lipoamide cofactor of the H protein. The sequence is that of Glycine dehydrogenase (decarboxylating) from Escherichia coli O7:K1 (strain IAI39 / ExPEC).